Reading from the N-terminus, the 230-residue chain is Membrane protein (230 aa).

Residues 1–24 (MSSPTTPVPVISWTADEAIKFLKE) are Virion surface-facing. A helical transmembrane segment spans residues 25-45 (WNFSLGIIVLFITIILQFGYT). The Intravirion segment spans residues 46–55 (SRSMFVYVIK). Residues 56–76 (MVILWLMWPLTIILTIFNCVY) form a helical membrane-spanning segment. At 77–84 (ALNNVYLG) the chain is on the virion surface side. A helical membrane pass occupies residues 85–105 (FSIVFTIVAIIMWVVYFVNSI). Residues 106 to 228 (RLFIRTGSWW…SGMDTALLRN (123 aa)) are Intravirion-facing.

This sequence belongs to the betacoronaviruses M protein family. Homomultimer. Interacts with envelope E protein in the budding compartment of the host cell, which is located between endoplasmic reticulum and the Golgi complex. Forms a complex with HE and S proteins. Interacts with nucleocapsid N protein. This interaction probably participates in RNA packaging into the virus.

Its subcellular location is the virion membrane. The protein resides in the host Golgi apparatus membrane. Its function is as follows. Component of the viral envelope that plays a central role in virus morphogenesis and assembly via its interactions with other viral proteins. The sequence is that of Membrane protein from Porcine hemagglutinating encephalomyelitis virus (strain 67N) (HEV-67N).